An 89-amino-acid chain; its full sequence is Small ribosomal subunit protein uS15 (89 aa).

Over residues 1 to 10 (MSITAEKKQE) the composition is skewed to basic and acidic residues. Residues 1 to 24 (MSITAEKKQEVIQSNARAEGDTGS) are disordered.

Belongs to the universal ribosomal protein uS15 family. As to quaternary structure, part of the 30S ribosomal subunit. Forms a bridge to the 50S subunit in the 70S ribosome, contacting the 23S rRNA.

Functionally, one of the primary rRNA binding proteins, it binds directly to 16S rRNA where it helps nucleate assembly of the platform of the 30S subunit by binding and bridging several RNA helices of the 16S rRNA. In terms of biological role, forms an intersubunit bridge (bridge B4) with the 23S rRNA of the 50S subunit in the ribosome. This is Small ribosomal subunit protein uS15 from Novosphingobium aromaticivorans (strain ATCC 700278 / DSM 12444 / CCUG 56034 / CIP 105152 / NBRC 16084 / F199).